A 235-amino-acid polypeptide reads, in one-letter code: Small ribosomal subunit protein uS2 (235 aa).

This sequence belongs to the universal ribosomal protein uS2 family.

In Synechococcus sp. (strain RCC307), this protein is Small ribosomal subunit protein uS2.